We begin with the raw amino-acid sequence, 601 residues long: Elongation factor 4 (601 aa).

The tr-type G domain occupies Ser-5 to Asn-187. GTP contacts are provided by residues Asp-17–Thr-22 and Asn-134–Asp-137.

This sequence belongs to the TRAFAC class translation factor GTPase superfamily. Classic translation factor GTPase family. LepA subfamily.

The protein resides in the cell inner membrane. The catalysed reaction is GTP + H2O = GDP + phosphate + H(+). Functionally, required for accurate and efficient protein synthesis under certain stress conditions. May act as a fidelity factor of the translation reaction, by catalyzing a one-codon backward translocation of tRNAs on improperly translocated ribosomes. Back-translocation proceeds from a post-translocation (POST) complex to a pre-translocation (PRE) complex, thus giving elongation factor G a second chance to translocate the tRNAs correctly. Binds to ribosomes in a GTP-dependent manner. The protein is Elongation factor 4 of Orientia tsutsugamushi (strain Ikeda) (Rickettsia tsutsugamushi).